Reading from the N-terminus, the 260-residue chain is MEAPVFNLEGEEVDTVELPSFFEEPVRKDLIRRAVLAAQANRRQPYGTDPRAGFRTSAESWGAGHGVAMVPRVKGRRHPAAGRAARVAQAVGGQKAHAPTPEKDWTQRVNRKERRAALRSALAATAKPEFVKERGHVIDDVPHLPVVVVDELKSLNKAREVREFFKSVGLWADVERAKSNRRIRAGKGKRRGRRYVKPKSVLIVVDEDEGIKLGARNHPGVDVVEAMHLGVEHLAPGAHPGRLTVFTPGALEVLEERLGE.

Belongs to the universal ribosomal protein uL4 family. As to quaternary structure, part of the 50S ribosomal subunit.

Functionally, one of the primary rRNA binding proteins, this protein initially binds near the 5'-end of the 23S rRNA. It is important during the early stages of 50S assembly. It makes multiple contacts with different domains of the 23S rRNA in the assembled 50S subunit and ribosome. Its function is as follows. Forms part of the polypeptide exit tunnel. This chain is Large ribosomal subunit protein uL4, found in Methanopyrus kandleri (strain AV19 / DSM 6324 / JCM 9639 / NBRC 100938).